Reading from the N-terminus, the 726-residue chain is Dipeptidyl-peptidase 5 (726 aa).

An N-terminal signal peptide occupies residues Met-1–Ala-19. 2 N-linked (GlcNAc...) asparagine glycosylation sites follow: Asn-96 and Asn-252. Positions Val-268 to Val-292 are disordered. Residue Asn-485 is glycosylated (N-linked (GlcNAc...) asparagine). The Charge relay system role is filled by Ser-558. Asn-605 carries N-linked (GlcNAc...) asparagine glycosylation. Active-site charge relay system residues include Asp-641 and His-673. Asn-699 carries an N-linked (GlcNAc...) asparagine glycan.

Belongs to the peptidase S9C family.

The protein resides in the secreted. Extracellular dipeptidyl-peptidase which removes N-terminal dipeptides sequentially from polypeptides having unsubstituted N-termini. Contributes to pathogenicity. The polypeptide is Dipeptidyl-peptidase 5 (DPP5) (Arthroderma otae (Microsporum canis)).